The primary structure comprises 329 residues: DNA-directed RNA polymerase subunit alpha (329 aa).

The tract at residues 1 to 235 (MQGSVTEFLK…EQLEAFVDLR (235 aa)) is alpha N-terminal domain (alpha-NTD). The tract at residues 249–329 (FDPILLRPVD…NWPPASIADE (81 aa)) is alpha C-terminal domain (alpha-CTD).

Belongs to the RNA polymerase alpha chain family. In terms of assembly, homodimer. The RNAP catalytic core consists of 2 alpha, 1 beta, 1 beta' and 1 omega subunit. When a sigma factor is associated with the core the holoenzyme is formed, which can initiate transcription.

It catalyses the reaction RNA(n) + a ribonucleoside 5'-triphosphate = RNA(n+1) + diphosphate. Functionally, DNA-dependent RNA polymerase catalyzes the transcription of DNA into RNA using the four ribonucleoside triphosphates as substrates. The chain is DNA-directed RNA polymerase subunit alpha from Cronobacter sakazakii (strain ATCC BAA-894) (Enterobacter sakazakii).